A 347-amino-acid polypeptide reads, in one-letter code: Holliday junction branch migration complex subunit RuvB (347 aa).

The segment at 1 to 181 (MTRNSLLNPE…FGIPVRLQFY (181 aa)) is large ATPase domain (RuvB-L). Residues L20, R21, G62, K65, T66, T67, R171, Y181, and R218 each coordinate ATP. Mg(2+) is bound at residue T66. Residues 182 to 252 (SIEELRQVIT…IADEALNRLE (71 aa)) form a small ATPAse domain (RuvB-S) region. The tract at residues 255-347 (KLGLDLMDRR…SEIKNQPGLL (93 aa)) is head domain (RuvB-H). DNA-binding residues include R291, R310, and R315.

The protein belongs to the RuvB family. In terms of assembly, homohexamer. Forms an RuvA(8)-RuvB(12)-Holliday junction (HJ) complex. HJ DNA is sandwiched between 2 RuvA tetramers; dsDNA enters through RuvA and exits via RuvB. An RuvB hexamer assembles on each DNA strand where it exits the tetramer. Each RuvB hexamer is contacted by two RuvA subunits (via domain III) on 2 adjacent RuvB subunits; this complex drives branch migration. In the full resolvosome a probable DNA-RuvA(4)-RuvB(12)-RuvC(2) complex forms which resolves the HJ.

It localises to the cytoplasm. It carries out the reaction ATP + H2O = ADP + phosphate + H(+). In terms of biological role, the RuvA-RuvB-RuvC complex processes Holliday junction (HJ) DNA during genetic recombination and DNA repair, while the RuvA-RuvB complex plays an important role in the rescue of blocked DNA replication forks via replication fork reversal (RFR). RuvA specifically binds to HJ cruciform DNA, conferring on it an open structure. The RuvB hexamer acts as an ATP-dependent pump, pulling dsDNA into and through the RuvAB complex. RuvB forms 2 homohexamers on either side of HJ DNA bound by 1 or 2 RuvA tetramers; 4 subunits per hexamer contact DNA at a time. Coordinated motions by a converter formed by DNA-disengaged RuvB subunits stimulates ATP hydrolysis and nucleotide exchange. Immobilization of the converter enables RuvB to convert the ATP-contained energy into a lever motion, pulling 2 nucleotides of DNA out of the RuvA tetramer per ATP hydrolyzed, thus driving DNA branch migration. The RuvB motors rotate together with the DNA substrate, which together with the progressing nucleotide cycle form the mechanistic basis for DNA recombination by continuous HJ branch migration. Branch migration allows RuvC to scan DNA until it finds its consensus sequence, where it cleaves and resolves cruciform DNA. This is Holliday junction branch migration complex subunit RuvB from Zymomonas mobilis subsp. mobilis (strain ATCC 31821 / ZM4 / CP4).